The following is a 313-amino-acid chain: Protein-glutamine deamidase Cif (313 aa).

Catalysis depends on residues Cys-128, His-186, and Gln-205.

This sequence belongs to the Cif family.

Its subcellular location is the secreted. The protein localises to the host nucleus. It catalyses the reaction L-glutaminyl-[protein] + H2O = L-glutamyl-[protein] + NH4(+). Functionally, protein-glutamine deamidase effector that inhibits the host cell cycle and other key cellular processes such as the actin network and programmed-cell death. Acts by mediating the side chain deamidation of 'Gln-40' of host NEDD8, converting it to glutamate, thereby abolishing the activity of cullin-RING-based E3 ubiquitin-protein ligase complexes (CRL complexes). Inactivation of CRL complexes prevents ubiquitination and subsequent degradation of the cyclin-dependent kinase inhibitors CDKN1A/p21 and CDKN1B/p27, leading to G1 and G2 cell cycle arrests in host cells. Deamidation of 'Gln-40' of host NEDD8 also triggers macrophage-specific programmed cell death. Also able to catalyze deamidation of 'Gln-40' of host ubiquitin in vitro; however, NEDD8 constitutes the preferred substrate in vivo. The polypeptide is Protein-glutamine deamidase Cif (Photorhabdus laumondii subsp. laumondii (strain DSM 15139 / CIP 105565 / TT01) (Photorhabdus luminescens subsp. laumondii)).